Consider the following 472-residue polypeptide: 3-isopropylmalate dehydratase large subunit (472 aa).

The [4Fe-4S] cluster site is built by Cys347, Cys407, and Cys410.

Belongs to the aconitase/IPM isomerase family. LeuC type 1 subfamily. As to quaternary structure, heterodimer of LeuC and LeuD. Requires [4Fe-4S] cluster as cofactor.

The catalysed reaction is (2R,3S)-3-isopropylmalate = (2S)-2-isopropylmalate. It functions in the pathway amino-acid biosynthesis; L-leucine biosynthesis; L-leucine from 3-methyl-2-oxobutanoate: step 2/4. In terms of biological role, catalyzes the isomerization between 2-isopropylmalate and 3-isopropylmalate, via the formation of 2-isopropylmaleate. In Bacillus licheniformis (strain ATCC 14580 / DSM 13 / JCM 2505 / CCUG 7422 / NBRC 12200 / NCIMB 9375 / NCTC 10341 / NRRL NRS-1264 / Gibson 46), this protein is 3-isopropylmalate dehydratase large subunit.